The chain runs to 308 residues: Ribosomal protein L11 methyltransferase (308 aa).

S-adenosyl-L-methionine is bound by residues Thr160, Gly181, Asp203, and Asn245.

It belongs to the methyltransferase superfamily. PrmA family.

The protein localises to the cytoplasm. It catalyses the reaction L-lysyl-[protein] + 3 S-adenosyl-L-methionine = N(6),N(6),N(6)-trimethyl-L-lysyl-[protein] + 3 S-adenosyl-L-homocysteine + 3 H(+). Methylates ribosomal protein L11. This Thermoanaerobacter sp. (strain X514) protein is Ribosomal protein L11 methyltransferase.